The primary structure comprises 225 residues: RNA-binding protein 24-A (225 aa).

The RRM domain occupies 11–88; sequence TKIFVGGLPY…RKANVNLAYL (78 aa).

The protein resides in the nucleus. The protein localises to the cytoplasm. Its function is as follows. Multifunctional RNA-binding protein involved in the regulation of pre-mRNA splicing, mRNA stability and mRNA translation important for cell fate decision and differentiation. Plays a major role in pre-mRNA alternative splicing regulation. Mediates preferentially muscle-specific exon inclusion in numerous mRNAs important for striated cardiac and skeletal muscle cell differentiation. Binds to intronic splicing enhancer (ISE) composed of stretches of GU-rich motifs localized in flanking intron of exon that will be included by alternative splicing. Involved in embryonic stem cell (ESC) transition to cardiac cell differentiation by promoting pre-mRNA alternative splicing events of several pluripotency and/or differentiation genes. Plays a role in the regulation of mRNA stability and mRNA translation to which it is bound. Involved in myogenic differentiation by regulating myog levels. Binds to a huge amount of mRNAs. Required for embryonic heart development, sarcomer and M-band formation in striated muscles. The protein is RNA-binding protein 24-A (rbm24-a) of Xenopus laevis (African clawed frog).